A 100-amino-acid chain; its full sequence is Urease subunit gamma (100 aa).

This sequence belongs to the urease gamma subunit family. Heterotrimer of UreA (gamma), UreB (beta) and UreC (alpha) subunits. Three heterotrimers associate to form the active enzyme.

It is found in the cytoplasm. It carries out the reaction urea + 2 H2O + H(+) = hydrogencarbonate + 2 NH4(+). Its pathway is nitrogen metabolism; urea degradation; CO(2) and NH(3) from urea (urease route): step 1/1. The protein is Urease subunit gamma of Actinobacillus pleuropneumoniae (Haemophilus pleuropneumoniae).